Reading from the N-terminus, the 245-residue chain is 23S rRNA (guanosine-2'-O-)-methyltransferase RlmB (245 aa).

S-adenosyl-L-methionine contacts are provided by G197, I217, and L226.

It belongs to the class IV-like SAM-binding methyltransferase superfamily. RNA methyltransferase TrmH family. RlmB subfamily.

It localises to the cytoplasm. The catalysed reaction is guanosine(2251) in 23S rRNA + S-adenosyl-L-methionine = 2'-O-methylguanosine(2251) in 23S rRNA + S-adenosyl-L-homocysteine + H(+). Specifically methylates the ribose of guanosine 2251 in 23S rRNA. This chain is 23S rRNA (guanosine-2'-O-)-methyltransferase RlmB, found in Photobacterium profundum (strain SS9).